The sequence spans 691 residues: MAAAAGDGGGEGGAGLGSAAGLGPGPGLRGQGPSAEAHEGAPDPMPAALHPEEVAARLQRMQRELSNRRKILVKNLPQDSNCQEVHDLLKDYDLKYCYVDRNKRTAFVTLLNGEQAQNAIQMFHQYSFRGKDLIVQLQPTDALLCITNVPISFTSEEFEELVRAYGNIERCFLVYSEVTGHSKGYGFVEYMKKDFAAKARLELLGRQLGASALFAQWMDVNLLASELIHSKCLCIDKLPSDYRDSEELLQIFSSVHKPVFCQLAQDEGSYVGGFAVVEYSTAEQAEEVQQAADGMTIKGSKVQVSFCAPGAPGRSTLAALIAAQRVMHSNQKGLLPEPNPVQIMKSLNNPAMLQVLLQPQLCGRAVKPAVLGTPHSLPHLMNPSISPAFLHLNKAHQSSVMGNTSNLFLQNLSHIPLAQQQLMKFENIHTNNKPGLLGEPPAVVLQTALGIGSVLPLKKELGHHHGEAHKTSSLIPTQTTITAGMGMLPFFPNQHIAGQAGPGHSNTQEKQPATVGMAEGNFSGSQPYLQSFPNLAAGSLLVGHHKQQQSQPKGTEISSGAASKNQTSLLGEPPKEIRLSKNPYLNLASVLPSVCLSSPASKTTLHKTGIASSILDAISQGSESQHALEKCIAYSPPFGDYAQVSSLRNEKRGSSYLISAPEGGSVECVDQHSQGTGAYYMETYLKKKRVY.

The span at Met1–Gly30 shows a compositional bias: gly residues. The disordered stretch occupies residues Met1–Ala47. An N-acetylalanine modification is found at Ala2. RRM domains lie at Arg69–Thr140, Ala142–Val220, and Lys231–Pro309. Disordered regions lie at residues Pro492–Phe522 and Gly543–Pro574. A compositionally biased stretch (polar residues) spans Gln548–Leu569.

As to quaternary structure, interacts with PTBP1 and RAVER1.

It localises to the nucleus. It is found in the cytoplasm. Its function is as follows. May bind single-stranded nucleic acids. The chain is Ribonucleoprotein PTB-binding 2 (RAVER2) from Homo sapiens (Human).